The chain runs to 271 residues: Large ribosomal subunit protein eL8 (271 aa).

It belongs to the eukaryotic ribosomal protein eL8 family.

The chain is Large ribosomal subunit protein eL8 (RpL7A) from Drosophila melanogaster (Fruit fly).